We begin with the raw amino-acid sequence, 321 residues long: GDP-L-fucose synthase (321 aa).

14-20 (GGSGLVG) serves as a coordination point for NADP(+). Tyr-143 acts as the Proton donor/acceptor in catalysis. NADP(+) contacts are provided by residues Lys-147, 170–173 (PTNV), and His-186. Residues Lys-194, Trp-208, Arg-215, and Asp-277 each coordinate substrate.

Belongs to the NAD(P)-dependent epimerase/dehydratase family. Fucose synthase subfamily. Homodimer.

The enzyme catalyses GDP-beta-L-fucose + NADP(+) = GDP-4-dehydro-alpha-D-rhamnose + NADPH + H(+). It functions in the pathway nucleotide-sugar biosynthesis; GDP-L-fucose biosynthesis via de novo pathway; GDP-L-fucose from GDP-alpha-D-mannose: step 2/2. Functionally, catalyzes the two-step NADP-dependent conversion of GDP-4-dehydro-6-deoxy-D-mannose to GDP-fucose, involving an epimerase and a reductase reaction. This Cricetulus griseus (Chinese hamster) protein is GDP-L-fucose synthase (GFUS).